We begin with the raw amino-acid sequence, 130 residues long: Small ribosomal subunit protein uS8 (130 aa).

Belongs to the universal ribosomal protein uS8 family. In terms of assembly, part of the 30S ribosomal subunit. Contacts proteins S5 and S12.

In terms of biological role, one of the primary rRNA binding proteins, it binds directly to 16S rRNA central domain where it helps coordinate assembly of the platform of the 30S subunit. This chain is Small ribosomal subunit protein uS8, found in Klebsiella pneumoniae (strain 342).